A 273-amino-acid chain; its full sequence is Imidazole glycerol phosphate synthase subunit HisF (273 aa).

Active-site residues include Asp-11 and Asp-134.

It belongs to the HisA/HisF family. Heterodimer of HisH and HisF.

Its subcellular location is the cytoplasm. The enzyme catalyses 5-[(5-phospho-1-deoxy-D-ribulos-1-ylimino)methylamino]-1-(5-phospho-beta-D-ribosyl)imidazole-4-carboxamide + L-glutamine = D-erythro-1-(imidazol-4-yl)glycerol 3-phosphate + 5-amino-1-(5-phospho-beta-D-ribosyl)imidazole-4-carboxamide + L-glutamate + H(+). It participates in amino-acid biosynthesis; L-histidine biosynthesis; L-histidine from 5-phospho-alpha-D-ribose 1-diphosphate: step 5/9. In terms of biological role, IGPS catalyzes the conversion of PRFAR and glutamine to IGP, AICAR and glutamate. The HisF subunit catalyzes the cyclization activity that produces IGP and AICAR from PRFAR using the ammonia provided by the HisH subunit. The protein is Imidazole glycerol phosphate synthase subunit HisF of Methanococcoides burtonii (strain DSM 6242 / NBRC 107633 / OCM 468 / ACE-M).